Here is a 529-residue protein sequence, read N- to C-terminus: Putative UPF0481 protein At3g02645 (529 aa).

2 N-linked (GlcNAc...) asparagine glycosylation sites follow: Asn-365 and Asn-403. The helical transmembrane segment at 498-518 (ILAFLAAVLLLMLVSLQLFSL) threads the bilayer.

Belongs to the UPF0481 family.

It localises to the membrane. The protein is Putative UPF0481 protein At3g02645 of Arabidopsis thaliana (Mouse-ear cress).